The primary structure comprises 222 residues: Protein ORM1 (222 aa).

A disordered region spans residues 1 to 57 (MTELDYQGTAEAASTSYSRNQTDLKPFPSAGSASSSIKTTEPVKDHRRRRSSSIISH). The Cytoplasmic segment spans residues 1–85 (MTELDYQGTA…NATWVDQRGA (85 aa)). Over residues 12 to 23 (AASTSYSRNQTD) the composition is skewed to polar residues. Phosphoserine is present on residues Ser-29, Ser-32, and Ser-56. The chain crosses the membrane as a helical span at residues 86–106 (WIIHVVIIILLKLFYNLFPGV). The Extracellular segment spans residues 107-109 (TTE). Residues 110–130 (WSWTLTNMTYVIGSYVMFHLI) traverse the membrane as a helical segment. The Cytoplasmic portion of the chain corresponds to 131 to 162 (KGTPFDFNGGAYDNLTMWEQIDDETLYTPSRK). Residues 163-183 (FLISVPIALFLVSTHYAHYDL) traverse the membrane as a helical segment. Residue Lys-184 is a topological domain, extracellular. The chain crosses the membrane as a helical span at residues 185-205 (LFSWNCFLTTFGAVVPKLPVT). The Cytoplasmic segment spans residues 206 to 222 (HRLRISIPGITGRAQIS).

This sequence belongs to the ORM family. As to quaternary structure, component of the SPOTS complex, at least composed of LCB1/2 (LCB1 and/or LCB2), ORM1/2 (ORM1 and/or ORM2), SAC1 and TSC3. Phosphorylated in case of disruption of sphingolipid synthesis. Phosphorylation regulates inhibitory activity of serine palmitoyltransferases (LCB1 and LCB2).

It localises to the endoplasmic reticulum membrane. Functionally, component of the SPOTS complex that acts as a negative regulator of sphingolipid synthesis. Acts by inhibiting serine palmitoyltransferases (LCB1 and LCB2) activity. Along with ORM2, plays a role in the phosphorylation of LAC1 and YPK1, the distribution of actin patches between mother and daughter cells, and in endocytosis. Disruption or inhibition of sphingolipid synthesis leads to the activation and phosphorylation of YPK1 through the TORC2 and PKH1 pathways, which in turn phosphorylates ORM1 and LAG1 to activate sphingolipid synthesis. The sequence is that of Protein ORM1 (ORM1) from Saccharomyces cerevisiae (strain ATCC 204508 / S288c) (Baker's yeast).